The primary structure comprises 313 residues: MSSLAKLGYFFDEKGVLKTEKDKKPFKFTTQEDYEELGEAVDLEVYELLETRCGLKRKALKLPGKTDEDEDLSFIFVSKNFKKAANLLVLIHGSGVVRAGQWARRLIINDNLECGTQIPYIERAIENGWGVVVMNTNLNESKDQDLKYSRTPVEHAETVWIACIEPSNAKSIYVVAHSRGGYDTASVLKKFGGDDRISKICLTDSPWFEFPKSCAQRARPLFVVNFLAHGALNSPSYKVREYREGNVAELWAGTQIHEWSSHCAIDAVFHILETEMTPSNYAEVMEEAKKLVVKSENSKESDDEAPKSKKICV.

The tract at residues 293–313 (VKSENSKESDDEAPKSKKICV) is disordered. The span at 296-307 (ENSKESDDEAPK) shows a compositional bias: basic and acidic residues.

This sequence belongs to the FAM172 family.

This is FAM172 family protein homolog Y75B8A.31 from Caenorhabditis elegans.